Reading from the N-terminus, the 181-residue chain is RNA pyrophosphohydrolase (181 aa).

The Nudix hydrolase domain occupies 6–148 (GFRPNVGIIV…KRQVYRQALQ (143 aa)). Residues 38 to 59 (GGVEANETPLEALYRELREEVG) carry the Nudix box motif.

The protein belongs to the Nudix hydrolase family. RppH subfamily. A divalent metal cation is required as a cofactor.

Functionally, accelerates the degradation of transcripts by removing pyrophosphate from the 5'-end of triphosphorylated RNA, leading to a more labile monophosphorylated state that can stimulate subsequent ribonuclease cleavage. The sequence is that of RNA pyrophosphohydrolase from Halorhodospira halophila (strain DSM 244 / SL1) (Ectothiorhodospira halophila (strain DSM 244 / SL1)).